We begin with the raw amino-acid sequence, 382 residues long: 1-deoxy-D-xylulose 5-phosphate reductoisomerase (382 aa).

NADPH is bound by residues Thr10, Gly11, Ser12, Ile13, Gly36, and Asn122. Lys123 lines the 1-deoxy-D-xylulose 5-phosphate pocket. Position 124 (Glu124) interacts with NADPH. Position 148 (Asp148) interacts with Mn(2+). 1-deoxy-D-xylulose 5-phosphate-binding residues include Ser149, Glu150, Ser174, and His197. Glu150 lines the Mn(2+) pocket. An NADPH-binding site is contributed by Gly203. Residues Ser210, Asn215, Lys216, and Glu219 each coordinate 1-deoxy-D-xylulose 5-phosphate. Glu219 lines the Mn(2+) pocket.

The protein belongs to the DXR family. It depends on Mg(2+) as a cofactor. Mn(2+) serves as cofactor.

It catalyses the reaction 2-C-methyl-D-erythritol 4-phosphate + NADP(+) = 1-deoxy-D-xylulose 5-phosphate + NADPH + H(+). It participates in isoprenoid biosynthesis; isopentenyl diphosphate biosynthesis via DXP pathway; isopentenyl diphosphate from 1-deoxy-D-xylulose 5-phosphate: step 1/6. Its function is as follows. Catalyzes the NADPH-dependent rearrangement and reduction of 1-deoxy-D-xylulose-5-phosphate (DXP) to 2-C-methyl-D-erythritol 4-phosphate (MEP). The protein is 1-deoxy-D-xylulose 5-phosphate reductoisomerase of Pelodictyon phaeoclathratiforme (strain DSM 5477 / BU-1).